Consider the following 91-residue polypeptide: Cytochrome c-554(547) (91 aa).

Positions 15, 18, 19, and 64 each coordinate heme c.

As to quaternary structure, monomer. Binds 1 heme c group covalently per subunit.

The polypeptide is Cytochrome c-554(547) (Halothiobacillus neapolitanus (Thiobacillus neapolitanus)).